A 228-amino-acid polypeptide reads, in one-letter code: Leucine rich adaptor protein 1-like (228 aa).

M1 carries the N-acetylmethionine modification. Residues 1–89 (MEDSPLPDLR…GSPRGSHSSA (89 aa)) are disordered. Composition is skewed to basic and acidic residues over residues 8 to 21 (DLRD…RKVP) and 28 to 42 (LRGE…DRDP). The span at 44-56 (GGSGGGGGGGGGC) shows a compositional bias: gly residues. The span at 57–88 (SSSSSYCSFPPSLSSSSSSSPTSGSPRGSHSS) shows a compositional bias: low complexity.

The sequence is that of Leucine rich adaptor protein 1-like (LURAP1L) from Homo sapiens (Human).